The chain runs to 370 residues: Glutathione S-transferase omega-like 2 (370 aa).

R15 contributes to the glutathione binding site. The active-site Nucleophile is C46. Residues W79, R155, V158, E173, and S174 each contribute to the glutathione site. In terms of domain architecture, GST C-terminal spans 201-353 (PAQLKTQIDD…LHYTRSHTRI (153 aa)).

The protein belongs to the GST superfamily. Omega family. Homodimer.

Its subcellular location is the cytoplasm. The enzyme catalyses RX + glutathione = an S-substituted glutathione + a halide anion + H(+). It carries out the reaction L-dehydroascorbate + 2 glutathione = glutathione disulfide + L-ascorbate. Its function is as follows. Active as '1-Cys' thiol transferase against beta-hydroxyethyl disulfide (HED), as dehydroascorbate reductase and as dimethylarsinic acid reductase, while not active against the standard GST substrate 1-chloro-2,4-dinitrobenzene (CDNB). May be involved in cell wall organization and biogenesis. The sequence is that of Glutathione S-transferase omega-like 2 from Saccharomyces cerevisiae (strain ATCC 204508 / S288c) (Baker's yeast).